The chain runs to 326 residues: Fructose-1,6-bisphosphatase class 1 2 (326 aa).

Positions 84, 103, 105, and 106 each coordinate Mg(2+). Substrate-binding positions include 106–109 (DGSS), N198, and K262. Residue E268 coordinates Mg(2+).

Belongs to the FBPase class 1 family. In terms of assembly, homotetramer. Mg(2+) serves as cofactor.

It is found in the cytoplasm. It catalyses the reaction beta-D-fructose 1,6-bisphosphate + H2O = beta-D-fructose 6-phosphate + phosphate. It functions in the pathway carbohydrate biosynthesis; gluconeogenesis. This chain is Fructose-1,6-bisphosphatase class 1 2, found in Pseudoalteromonas translucida (strain TAC 125).